An 830-amino-acid polypeptide reads, in one-letter code: Histone acetyltransferase KAT2A (830 aa).

A disordered region spans residues 1 to 94 (MAEPSQAPNP…RKAQVRGLPR (94 aa)). Position 2 is an N-acetylalanine (Ala2). Composition is skewed to pro residues over residues 7–33 (APNP…PAPS) and 41–51 (APTPAPAPAPA). Residues 58–69 (TGSGGAGVGSGG) are compositionally biased toward gly residues. A compositionally biased stretch (basic residues) spans 83–94 (SQRKAQVRGLPR). Position 302 is a phosphoserine (Ser302). The span at 398-417 (SFSPSMGGGSNSSLSLDSAG) shows a compositional bias: low complexity. Residues 398-426 (SFSPSMGGGSNSSLSLDSAGTEPMPAGEK) are disordered. The N-acetyltransferase domain occupies 496-649 (VIGNSLTPKA…GATLMECELN (154 aa)). An N6-acetyllysine modification is found at Lys542. The active-site Proton donor/acceptor is Glu568. Acetyl-CoA is bound by residues 572-574 (CAV), 579-585 (QVKGYGT), and Tyr610. Succinyl-CoA is bound by residues 572 to 574 (CAV), 579 to 585 (QVKGYGT), and Tyr610. Residue Lys721 forms a Glycyl lysine isopeptide (Lys-Gly) (interchain with G-Cter in SUMO2) linkage. In terms of domain architecture, Bromo spans 721-825 (KDPDQLYTTL…KFFYFKLKEG (105 aa)). A Phosphothreonine modification is found at Thr728. Residues Lys752 and Lys784 each participate in a glycyl lysine isopeptide (Lys-Gly) (interchain with G-Cter in SUMO2) cross-link.

It belongs to the acetyltransferase family. GCN5 subfamily. As to quaternary structure, interacts with EP300, CREBBP and ADA2. Component of the TFTC-HAT complex, at least composed of TAF5L, TAF6L, TAF3, TADA3L, SUPT3H/SPT3, TAF2/TAFII150, TAF4/TAFII135, TAF5/TAFII100, KAT2A/GCN5L2, TAF10 and TRRAP. Component of the STAGA transcription coactivator-HAT complex, at least composed of SUPT3H, KAT2A, SUPT7L, TAF5L, TAF6L, TADA3L, TAD1L, TAF10, TAF12, TRRAP and TAF9. The STAGA core complex is associated with a subcomplex required for histone deubiquitination composed of ATXN7L3, ENY2 and USP22. Component of the ADA2A-containing complex (ATAC), composed of KAT14, KAT2A, TADA2L, TADA3L, ZZ3, MBIP, WDR5, YEATS2, CCDC101 and DR1. In the complex, it probably interacts directly with KAT14, MBIP and WDR5. Interacts with PML. Interacts with CEBPB. Interacts with TACC1, TACC2 and TACC3. Interacts with RELA. Interacts with NFATC2. Interacts with TBX5. Interacts with PLK4. Associates with the 2-oxoglutarate dehydrogenase complex. Interacts with XPC; leading to KAT2A recruitment to promoters and subsequent acetylation of histones. Interacts with ERCC3/XPB; leading to KAT2A recruitment to promoters and subsequent acetylation of histones. Interacts with ISL1. Interactions of ISL1 with MLIP1 or KAT2A may be mutually exclusive. In terms of processing, acetylated at Lys-542, inhibiting the protein acetyltransferase activity. Deacetylation at Lys-542 by SIRT6 promotes phosphorylation at Ser-302 and Thr-728 and subsequent activation of the protein acetyltransferase activity, leading to acetylation and inactivation of PPARGC1A. As to expression, in brain, highly expressed in the hippocampal CA1 region (at protein level). Also expressed in the hippocampal subregions CA3 and the dentate gyrus as well as in the cortex and prefrontal cortex. Expressed at low level in the cerebellum.

Its subcellular location is the nucleus. The protein localises to the chromosome. The protein resides in the cytoplasm. It is found in the cytoskeleton. It localises to the microtubule organizing center. Its subcellular location is the centrosome. It carries out the reaction L-lysyl-[histone] + acetyl-CoA = N(6)-acetyl-L-lysyl-[histone] + CoA + H(+). The enzyme catalyses L-lysyl-[protein] + acetyl-CoA = N(6)-acetyl-L-lysyl-[protein] + CoA + H(+). The catalysed reaction is succinyl-CoA + L-lysyl-[protein] = N(6)-succinyl-L-lysyl-[protein] + CoA + H(+). It catalyses the reaction glutaryl-CoA + L-lysyl-[protein] = N(6)-glutaryl-L-lysyl-[protein] + CoA + H(+). Protein lysine acyltransferase that can act as a acetyltransferase, glutaryltransferase, succinyltransferase or malonyltransferase, depending on the context. Acts as a histone lysine succinyltransferase: catalyzes succinylation of histone H3 on 'Lys-79' (H3K79succ), with a maximum frequency around the transcription start sites of genes. Succinylation of histones gives a specific tag for epigenetic transcription activation. Association with the 2-oxoglutarate dehydrogenase complex, which provides succinyl-CoA, is required for histone succinylation. In different complexes, functions either as an acetyltransferase (HAT) or as a succinyltransferase: in the SAGA and ATAC complexes, acts as a histone acetyltransferase. Has significant histone acetyltransferase activity with core histones, but not with nucleosome core particles. Has a a strong preference for acetylation of H3 at 'Lys-9' (H3K9ac). Acetylation of histones gives a specific tag for epigenetic transcription activation. Recruited by the XPC complex at promoters, where it specifically mediates acetylation of histone variant H2A.Z.1/H2A.Z, thereby promoting expression of target genes. Involved in long-term memory consolidation and synaptic plasticity: acts by promoting expression of a hippocampal gene expression network linked to neuroactive receptor signaling. Acts as a positive regulator of T-cell activation: upon TCR stimulation, recruited to the IL2 promoter following interaction with NFATC2 and catalyzes acetylation of histone H3 at 'Lys-9' (H3K9ac), leading to promote IL2 expression. Required for growth and differentiation of craniofacial cartilage and bone by regulating acetylation of histone H3 at 'Lys-9' (H3K9ac). Regulates embryonic stem cell (ESC) pluripotency and differentiation. Also acetylates non-histone proteins, such as CEBPB, MRE11, PPARGC1A, PLK4 and TBX5. Involved in heart and limb development by mediating acetylation of TBX5, acetylation regulating nucleocytoplasmic shuttling of TBX5. Acts as a negative regulator of centrosome amplification by mediating acetylation of PLK4. Acts as a negative regulator of gluconeogenesis by mediating acetylation and subsequent inactivation of PPARGC1A. Also acts as a histone glutaryltransferase: catalyzes glutarylation of histone H4 on 'Lys-91' (H4K91glu), a mark that destabilizes nucleosomes by promoting dissociation of the H2A-H2B dimers from nucleosomes. The polypeptide is Histone acetyltransferase KAT2A (Mus musculus (Mouse)).